The following is a 177-amino-acid chain: Ribosome maturation factor RimM (177 aa).

The 74-residue stretch at 104–177 folds into the PRC barrel domain; the sequence is GVDGIWADLI…IIKVKLMEGM (74 aa).

The protein belongs to the RimM family. As to quaternary structure, binds ribosomal protein uS19.

It is found in the cytoplasm. An accessory protein needed during the final step in the assembly of 30S ribosomal subunit, possibly for assembly of the head region. Essential for efficient processing of 16S rRNA. May be needed both before and after RbfA during the maturation of 16S rRNA. It has affinity for free ribosomal 30S subunits but not for 70S ribosomes. The protein is Ribosome maturation factor RimM of Magnetococcus marinus (strain ATCC BAA-1437 / JCM 17883 / MC-1).